The sequence spans 318 residues: NADH-ubiquinone oxidoreductase chain 1 (318 aa).

Transmembrane regions (helical) follow at residues 2 to 22, 69 to 89, 100 to 120, 146 to 166, 171 to 191, 222 to 242, 253 to 273, and 294 to 314; these read PVIN…FLML, ILYI…WTPL, LGLL…LWSG, LALI…STLI, HSWL…STLA, LFFM…AMIF, ELHT…FLWI, and LPLT…TSGI.

Belongs to the complex I subunit 1 family. Core subunit of respiratory chain NADH dehydrogenase (Complex I) which is composed of 45 different subunits.

The protein localises to the mitochondrion inner membrane. The enzyme catalyses a ubiquinone + NADH + 5 H(+)(in) = a ubiquinol + NAD(+) + 4 H(+)(out). Core subunit of the mitochondrial membrane respiratory chain NADH dehydrogenase (Complex I) which catalyzes electron transfer from NADH through the respiratory chain, using ubiquinone as an electron acceptor. Essential for the catalytic activity and assembly of complex I. The protein is NADH-ubiquinone oxidoreductase chain 1 (MT-ND1) of Pongo pygmaeus (Bornean orangutan).